The chain runs to 176 residues: Large ribosomal subunit protein uL10 (176 aa).

This sequence belongs to the universal ribosomal protein uL10 family. As to quaternary structure, part of the ribosomal stalk of the 50S ribosomal subunit. The N-terminus interacts with L11 and the large rRNA to form the base of the stalk. The C-terminus forms an elongated spine to which L12 dimers bind in a sequential fashion forming a multimeric L10(L12)X complex.

Forms part of the ribosomal stalk, playing a central role in the interaction of the ribosome with GTP-bound translation factors. This chain is Large ribosomal subunit protein uL10, found in Carboxydothermus hydrogenoformans (strain ATCC BAA-161 / DSM 6008 / Z-2901).